The primary structure comprises 286 residues: 4-hydroxybenzoate octaprenyltransferase (286 aa).

Helical transmembrane passes span 21-40 (GTLL…AGGM), 96-116 (LFVI…GLVV), 142-162 (FLGV…TGEV), 167-187 (WWLF…YAMV), 210-230 (QIIG…GWSA), 235-255 (LYGL…MLIF), and 266-286 (FLNN…DYLF).

Belongs to the UbiA prenyltransferase family. Requires Mg(2+) as cofactor.

It localises to the cell inner membrane. The catalysed reaction is all-trans-octaprenyl diphosphate + 4-hydroxybenzoate = 4-hydroxy-3-(all-trans-octaprenyl)benzoate + diphosphate. The protein operates within cofactor biosynthesis; ubiquinone biosynthesis. In terms of biological role, catalyzes the prenylation of para-hydroxybenzoate (PHB) with an all-trans polyprenyl group. Mediates the second step in the final reaction sequence of ubiquinone-8 (UQ-8) biosynthesis, which is the condensation of the polyisoprenoid side chain with PHB, generating the first membrane-bound Q intermediate 3-octaprenyl-4-hydroxybenzoate. The protein is 4-hydroxybenzoate octaprenyltransferase of Shewanella sp. (strain MR-4).